We begin with the raw amino-acid sequence, 282 residues long: Sulfur carrier protein FdhD (282 aa).

The active-site Cysteine persulfide intermediate is C115.

It belongs to the FdhD family.

The protein resides in the cytoplasm. Functionally, required for formate dehydrogenase (FDH) activity. Acts as a sulfur carrier protein that transfers sulfur from IscS to the molybdenum cofactor prior to its insertion into FDH. In Streptomyces coelicolor (strain ATCC BAA-471 / A3(2) / M145), this protein is Sulfur carrier protein FdhD.